Reading from the N-terminus, the 537-residue chain is Efflux pump ustT (537 aa).

Basic and acidic residues predominate over residues 1 to 25 (MAKEAQSLHELDNMKEKEVDQEKKA). Residues 1-50 (MAKEAQSLHELDNMKEKEVDQEKKAPTSVGDQEEHDDPKKQASHSQNVSE) are disordered. N-linked (GlcNAc...) asparagine glycosylation is present at N47. The next 8 helical transmembrane spans lie at 71 to 91 (PLAM…VSLL), 104 to 124 (WVYM…AGAM), 137 to 157 (GIGL…NAPL), 162 to 182 (MFLG…PLIG), 193 to 213 (WCFI…FFFV), 236 to 256 (LGSA…QWAG), 266 to 286 (IILL…SQML), and 304 to 324 (FGSF…TYWI). N333 carries N-linked (GlcNAc...) asparagine glycosylation. The next 4 helical transmembrane spans lie at 339-359 (AGIR…MGGG), 363-383 (LIGY…VGAG), 397-417 (WIGY…QASL), and 430-450 (TAIS…VCIG). A glycan (N-linked (GlcNAc...) asparagine) is linked at N501. The chain crosses the membrane as a helical span at residues 507-527 (TFYVALAAGITSMLSAFLVQW).

Belongs to the major facilitator superfamily. TCR/Tet family.

It localises to the cell membrane. Efflux pump; part of the gene cluster that mediates the biosynthesis of ustilaginoidins, dimeric gamma-naphthopyrones isolated from different fungal species. This Ustilaginoidea virens (Rice false smut fungus) protein is Efflux pump ustT.